Consider the following 264-residue polypeptide: Small ribosomal subunit protein eS1 (264 aa).

Lysine 34 carries the N6-acetyllysine; alternate modification. A Glycyl lysine isopeptide (Lys-Gly) (interchain with G-Cter in SUMO2); alternate cross-link involves residue lysine 34. Position 56 is an N6-acetyllysine (lysine 56). Tyrosine 155 is subject to ADP-ribosyltyrosine. The interval histidine 232 to valine 264 is disordered. Residues serine 236 and serine 237 each carry the phosphoserine modification. A compositionally biased stretch (basic and acidic residues) spans threonine 242–glycine 255. Position 249 is an N6-acetyllysine; alternate (lysine 249). A Glycyl lysine isopeptide (Lys-Gly) (interchain with G-Cter in SUMO2); alternate cross-link involves residue lysine 249. Residue tyrosine 256 is modified to Phosphotyrosine. Serine 263 is modified (phosphoserine).

Belongs to the eukaryotic ribosomal protein eS1 family. As to quaternary structure, component of the small ribosomal subunit. Mature ribosomes consist of a small (40S) and a large (60S) subunit. The 40S subunit contains about 33 different proteins and 1 molecule of RNA (18S). The 60S subunit contains about 49 different proteins and 3 molecules of RNA (28S, 5.8S and 5S). Identified in a IGF2BP1-dependent mRNP granule complex containing untranslated mRNAs. Binds with high affinity to IPO4. Interacts with DDIT3. Part of the small subunit (SSU) processome, composed of more than 70 proteins and the RNA chaperone small nucleolar RNA (snoRNA) U3. In terms of processing, ADP-ribosylated at Tyr-155 by PARP1 in presence of HPF1.

It localises to the cytoplasm. It is found in the nucleus. The protein resides in the nucleolus. Its function is as follows. Component of the small ribosomal subunit. The ribosome is a large ribonucleoprotein complex responsible for the synthesis of proteins in the cell. Part of the small subunit (SSU) processome, first precursor of the small eukaryotic ribosomal subunit. During the assembly of the SSU processome in the nucleolus, many ribosome biogenesis factors, an RNA chaperone and ribosomal proteins associate with the nascent pre-rRNA and work in concert to generate RNA folding, modifications, rearrangements and cleavage as well as targeted degradation of pre-ribosomal RNA by the RNA exosome. May play a role during erythropoiesis through regulation of transcription factor DDIT3. The chain is Small ribosomal subunit protein eS1 from Macaca fascicularis (Crab-eating macaque).